Reading from the N-terminus, the 157-residue chain is Transcription elongation factor GreA (157 aa).

Positions 47-75 (ENAEYDAAREKQGQIEDRITELENILSNA) form a coiled coil.

The protein belongs to the GreA/GreB family.

In terms of biological role, necessary for efficient RNA polymerase transcription elongation past template-encoded arresting sites. The arresting sites in DNA have the property of trapping a certain fraction of elongating RNA polymerases that pass through, resulting in locked ternary complexes. Cleavage of the nascent transcript by cleavage factors such as GreA or GreB allows the resumption of elongation from the new 3'terminus. GreA releases sequences of 2 to 3 nucleotides. This Mycoplasmopsis pulmonis (strain UAB CTIP) (Mycoplasma pulmonis) protein is Transcription elongation factor GreA.